The primary structure comprises 389 residues: MTARKSLDRYRRIVIKIGSALLVDRKTGLKKAWLDGMCADIAALKAKGVDVLVVSSGAIALGRSVLDLPSGALKLEESQAAAAVGQISLARAWSESLSHDDIVAGQILLTLGDTEERRRYLNARATINQLLKIGAVPIINENDTVATSEIRYGDNDRLAARVATMTGADLLILLSDIDGLYTAPPHLDPDAKFLETIADITPEIEAMAGGAASELSRGGMRTKIDAGKIATGAGCAMIIASGKTDRPLNAIANGARSSWFAPSGTPVTARKTWIAGQLQPAGELHVDEGAVTALGAGKSLLPAGVRKVTGHFGRGDTIAVIGPSGREIARGLVGYDAEEARQITGRKSAEIEAILGYAGRAAMVHRDDLVMTASVKTKAEKLKKDEAHA.

K16 provides a ligand contact to ATP. S56, D143, and N155 together coordinate substrate. 175 to 176 (SD) provides a ligand contact to ATP. One can recognise a PUA domain in the interval 281 to 358 (AGELHVDEGA…AEIEAILGYA (78 aa)).

The protein belongs to the glutamate 5-kinase family.

The protein resides in the cytoplasm. It catalyses the reaction L-glutamate + ATP = L-glutamyl 5-phosphate + ADP. The protein operates within amino-acid biosynthesis; L-proline biosynthesis; L-glutamate 5-semialdehyde from L-glutamate: step 1/2. Functionally, catalyzes the transfer of a phosphate group to glutamate to form L-glutamate 5-phosphate. The chain is Glutamate 5-kinase from Rhizobium rhizogenes (strain K84 / ATCC BAA-868) (Agrobacterium radiobacter).